Reading from the N-terminus, the 238-residue chain is Uridylate kinase (238 aa).

12–15 lines the ATP pocket; it reads KLSG. Residue Gly-54 participates in UMP binding. ATP-binding residues include Gly-55 and Arg-59. UMP contacts are provided by residues Asp-74 and 135 to 142; that span reads TGNPFFTT. ATP contacts are provided by Thr-162, Tyr-168, and Asp-171.

The protein belongs to the UMP kinase family. In terms of assembly, homohexamer.

The protein localises to the cytoplasm. It carries out the reaction UMP + ATP = UDP + ADP. Its pathway is pyrimidine metabolism; CTP biosynthesis via de novo pathway; UDP from UMP (UMPK route): step 1/1. With respect to regulation, inhibited by UTP. Catalyzes the reversible phosphorylation of UMP to UDP. This chain is Uridylate kinase, found in Bordetella pertussis (strain Tohama I / ATCC BAA-589 / NCTC 13251).